A 54-amino-acid polypeptide reads, in one-letter code: Ribulose bisphosphate carboxylase large chain (54 aa).

A propeptide spanning residues 1–2 (MS) is cleaved from the precursor. Proline 3 carries the post-translational modification N-acetylproline. Lysine 14 is subject to N6,N6,N6-trimethyllysine.

This sequence belongs to the RuBisCO large chain family. Type I subfamily. Heterohexadecamer of 8 large chains and 8 small chains.

It is found in the plastid. It localises to the chloroplast. It catalyses the reaction 2 (2R)-3-phosphoglycerate + 2 H(+) = D-ribulose 1,5-bisphosphate + CO2 + H2O. The enzyme catalyses D-ribulose 1,5-bisphosphate + O2 = 2-phosphoglycolate + (2R)-3-phosphoglycerate + 2 H(+). RuBisCO catalyzes two reactions: the carboxylation of D-ribulose 1,5-bisphosphate, the primary event in carbon dioxide fixation, as well as the oxidative fragmentation of the pentose substrate in the photorespiration process. Both reactions occur simultaneously and in competition at the same active site. The polypeptide is Ribulose bisphosphate carboxylase large chain (rbcL) (Ilex ciliospinosa (Sichuan holly)).